The sequence spans 102 residues: Small ribosomal subunit protein uS10 (102 aa).

It belongs to the universal ribosomal protein uS10 family. Part of the 30S ribosomal subunit.

Involved in the binding of tRNA to the ribosomes. In Xanthobacter autotrophicus (strain ATCC BAA-1158 / Py2), this protein is Small ribosomal subunit protein uS10.